Here is a 374-residue protein sequence, read N- to C-terminus: Ribosomal RNA large subunit methyltransferase G (374 aa).

It belongs to the methyltransferase superfamily. RlmG family.

The protein resides in the cytoplasm. The enzyme catalyses guanosine(1835) in 23S rRNA + S-adenosyl-L-methionine = N(2)-methylguanosine(1835) in 23S rRNA + S-adenosyl-L-homocysteine + H(+). In terms of biological role, specifically methylates the guanine in position 1835 (m2G1835) of 23S rRNA. The chain is Ribosomal RNA large subunit methyltransferase G from Pseudomonas putida (strain ATCC 47054 / DSM 6125 / CFBP 8728 / NCIMB 11950 / KT2440).